A 253-amino-acid chain; its full sequence is Sulfate transporter CysZ (253 aa).

4 helical membrane passes run 31 to 51, 75 to 95, 151 to 171, and 222 to 242; these read FVIL…WWLF, LLWP…FSTI, IVLL…PVLW, and IPLL…AMWV.

Belongs to the CysZ family.

It localises to the cell inner membrane. High affinity, high specificity proton-dependent sulfate transporter, which mediates sulfate uptake. Provides the sulfur source for the cysteine synthesis pathway. The sequence is that of Sulfate transporter CysZ from Escherichia coli (strain 55989 / EAEC).